A 943-amino-acid chain; its full sequence is Tyrosine-protein kinase transmembrane receptor ROR2 (943 aa).

A signal peptide spans 1–33; sequence MARGSALPRRPLLCIPAVWAAAALLLSVSRTSG. Topologically, residues 34–403 are extracellular; that stretch reads EVEVLDPNDP…CSPRDSSKMG (370 aa). The Ig-like C2-type domain maps to 55–145; it reads PTLKGYFLNF…VATNGMKTIT (91 aa). N-linked (GlcNAc...) asparagine glycosylation is present at N70. 9 disulfide bridges follow: C83-C135, C174-C239, C182-C232, C223-C264, C252-C300, C256-C286, C316-C394, C337-C377, and C365-C389. One can recognise an FZ domain in the interval 169–303; sequence HEDGFCQPYR…SPDAANCMRI (135 aa). Residue N188 is glycosylated (N-linked (GlcNAc...) asparagine). Residues 316–394 enclose the Kringle domain; sequence CYNGSGMDYR…RMELCDVPSC (79 aa). N-linked (GlcNAc...) asparagine glycosylation occurs at N318. Residues 404–424 traverse the membrane as a helical segment; sequence ILYILVPSIAIPLVIACLFFL. The Cytoplasmic portion of the chain corresponds to 425–943; the sequence is VCMCRNKQKA…VDEAQVQLEA (519 aa). 2 positions are modified to sulfoserine; partial: S469 and S471. One can recognise a Protein kinase domain in the interval 473–746; sequence VRFMEELGED…PRFKDIHSRL (274 aa). Residues 479–487 and K507 contribute to the ATP site; that span reads LGEDRFGKV. D615 acts as the Proton acceptor in catalysis. Y646 carries the post-translational modification Phosphotyrosine; by autocatalysis. Disordered stretches follow at residues 757–796 and 850–931; these read SSAQ…APPF and QVPP…DCDT. 2 stretches are compositionally biased toward low complexity: residues 765–791 and 857–872; these read SNTT…GPKQ and PKPS…TSTG. Asymmetric dimethylarginine is present on R785. The span at 873–883 shows a compositional bias: polar residues; it reads YVTTAPSNTSM.

Belongs to the protein kinase superfamily. Tyr protein kinase family. ROR subfamily. As to quaternary structure, homodimer; promotes osteogenesis. Binds YWHAB. Interacts with WTIP. Interacts with ROR2. The cofactor is Mg(2+).

It localises to the cell membrane. The catalysed reaction is L-tyrosyl-[protein] + ATP = O-phospho-L-tyrosyl-[protein] + ADP + H(+). Tyrosine-protein kinase receptor which may be involved in the early formation of the chondrocytes. It seems to be required for cartilage and growth plate development. Phosphorylates YWHAB, leading to induction of osteogenesis and bone formation. In contrast, has also been shown to have very little tyrosine kinase activity in vitro. May act as a receptor for wnt ligand WNT5A which may result in the inhibition of WNT3A-mediated signaling. This is Tyrosine-protein kinase transmembrane receptor ROR2 (ROR2) from Homo sapiens (Human).